Consider the following 296-residue polypeptide: Formylmethanofuran--tetrahydromethanopterin formyltransferase-like protein (296 aa).

This sequence belongs to the FTR family.

The protein is Formylmethanofuran--tetrahydromethanopterin formyltransferase-like protein (ehaS) of Methanothermobacter marburgensis (strain ATCC BAA-927 / DSM 2133 / JCM 14651 / NBRC 100331 / OCM 82 / Marburg) (Methanobacterium thermoautotrophicum).